Consider the following 316-residue polypeptide: Protein PXR1 (316 aa).

Residues 25 to 71 form the G-patch domain; that stretch reads TSRFGHQYLERMGWKPGKGLGLVEHATTSHVKVSIKDDNLGLGSKLA. A disordered region spans residues 146–280; that stretch reads GTTKKRKIDS…DSMLMPKEQL (135 aa). The segment covering 179-195 has biased composition (basic and acidic residues); that stretch reads DRKEKEEKKTEKENSEI. A compositionally biased stretch (basic residues) spans 196–209; it reads KKKKKEKKEKKEKK. Residues 210-240 show a composition bias toward basic and acidic residues; sequence EKKDKNEKKEKKDKNEKKEKKDKNEEKEKKE. The span at 241–260 shows a compositional bias: basic residues; it reads KKEKKEKKDKKDKKDKKDKK. A compositionally biased stretch (basic and acidic residues) spans 261–270; sequence EKKEVKEVTR.

The protein belongs to the PINX1 family.

The protein localises to the nucleus. The protein resides in the nucleolus. Functionally, involved in rRNA-processing at A0, A1 and A2 sites and negatively regulates telomerase. The sequence is that of Protein PXR1 (PXR1) from Debaryomyces hansenii (strain ATCC 36239 / CBS 767 / BCRC 21394 / JCM 1990 / NBRC 0083 / IGC 2968) (Yeast).